The chain runs to 103 residues: Protein S100-A16 (103 aa).

Positions Val-12 to Asn-47 constitute an EF-hand 1; degenerate domain. One can recognise an EF-hand 2 domain in the interval Gly-54–Pro-89. 5 residues coordinate Ca(2+): Asp-67, Asn-69, Asp-71, Arg-73, and Glu-78.

Belongs to the S-100 family. In terms of assembly, homodimer. Interacts with TP53. In terms of tissue distribution, ubiquitous. Highly expressed in esophagus, adipose tissues and colon. Expressed at lower level in lung, brain, pancreas and skeletal muscle. Expression is up-regulated in tumors of bladder, lung, thyroid gland, pancreas and ovary. Expressed in astrocytes.

It is found in the nucleus. Its subcellular location is the nucleolus. The protein resides in the cytoplasm. Functionally, calcium-binding protein. Binds one calcium ion per monomer. Can promote differentiation of adipocytes (in vitro). Overexpression in preadipocytes increases their proliferation, enhances adipogenesis and reduces insulin-stimulated glucose uptake. The chain is Protein S100-A16 from Homo sapiens (Human).